A 143-amino-acid polypeptide reads, in one-letter code: Transcriptional regulator MraZ (143 aa).

2 SpoVT-AbrB domains span residues 5–47 and 76–119; these read EYQH…SLEE and AAEV…DKSK.

Belongs to the MraZ family. As to quaternary structure, forms oligomers.

The protein resides in the cytoplasm. Its subcellular location is the nucleoid. The polypeptide is Transcriptional regulator MraZ (Acetivibrio thermocellus (strain ATCC 27405 / DSM 1237 / JCM 9322 / NBRC 103400 / NCIMB 10682 / NRRL B-4536 / VPI 7372) (Clostridium thermocellum)).